The primary structure comprises 295 residues: Bifunctional protein FolD (295 aa).

NADP(+)-binding positions include 165–167, Ser192, and Ile233; that span reads GRG.

Belongs to the tetrahydrofolate dehydrogenase/cyclohydrolase family. In terms of assembly, homodimer.

It catalyses the reaction (6R)-5,10-methylene-5,6,7,8-tetrahydrofolate + NADP(+) = (6R)-5,10-methenyltetrahydrofolate + NADPH. The catalysed reaction is (6R)-5,10-methenyltetrahydrofolate + H2O = (6R)-10-formyltetrahydrofolate + H(+). It participates in one-carbon metabolism; tetrahydrofolate interconversion. Catalyzes the oxidation of 5,10-methylenetetrahydrofolate to 5,10-methenyltetrahydrofolate and then the hydrolysis of 5,10-methenyltetrahydrofolate to 10-formyltetrahydrofolate. This Tropheryma whipplei (strain Twist) (Whipple's bacillus) protein is Bifunctional protein FolD.